We begin with the raw amino-acid sequence, 377 residues long: Apelin receptor (377 aa).

Topologically, residues 1–28 (MEDDGYNYYGADNQSECDYADWTPSGAL) are extracellular. The N-linked (GlcNAc...) asparagine glycan is linked to Asn-13. Disulfide bonds link Cys-17-Cys-279 and Cys-100-Cys-179. A helical membrane pass occupies residues 29-52 (IPAIYILVFLLGTTGNGLVLWTVF). The Cytoplasmic portion of the chain corresponds to 53–62 (WSSREKRRSA). A helical membrane pass occupies residues 63–84 (DIFIASLAVADLTFVVTLPLWA). At 85-97 (TYTYREFDWPFGT) the chain is on the extracellular side. A helical membrane pass occupies residues 98–123 (FSCKLSSYLIFVNMYASVFCLTGLSF). At 124 to 144 (DRYLAIVRPVANARLRLRVSG) the chain is on the cytoplasmic side. The chain crosses the membrane as a helical span at residues 145-162 (AVATAVLWVLAALLAVPV). The Extracellular portion of the chain corresponds to 163–196 (MVFRSTDIPENSTKTQCYMDYSMVATSNSEWAWE). Asn-173 carries N-linked (GlcNAc...) asparagine glycosylation. A helical transmembrane segment spans residues 197 to 221 (VGLGVSSTAVGFVVPFIIMLTCYFF). Residues 222 to 244 (IAQTIAGHFRKERIEGLRKRRRL) are Cytoplasmic-facing. A helical membrane pass occupies residues 245–268 (LSIIVVLVVTFALCWMPYHLVKTL). At 269–287 (YMLGNLLHWPCDFDSFLMN) the chain is on the extracellular side. A helical membrane pass occupies residues 288-310 (VFPYCTCISYVNSCLNPFLYAFF). Topologically, residues 311-377 (DPRFRRACTS…IPYSQETLVD (67 aa)) are cytoplasmic. Positions 335–349 (SSSAEKSASYSSGHS) are enriched in low complexity. Residues 335-377 (SSSAEKSASYSSGHSQGPGPNMCKGGEPMHEKSIPYSQETLVD) form a disordered region.

This sequence belongs to the G-protein coupled receptor 1 family. Homodimer; dimerization inhibits APLNR-mediated G protein and beta-arrestin signaling pathways compared to monomeric APLNR. In terms of tissue distribution, widely expressed. Highest expression in the lung, lower in the heart, placenta, ovary, skeletal muscle, mammary gland, kidney and several structures in the brain as the hypothalamus (supraoptic and periventricular nuclei), pituitary, olfactory bulb and pineal gland.

It is found in the cell membrane. Its function is as follows. G protein-coupled receptor for peptide hormones apelin (APLN) and apelin receptor early endogenous ligand (APELA/ELA), that plays a role in the regulation of normal cardiovascular function and fluid homeostasis. When acting as apelin receptor, activates both G(i) protein pathway that inhibits adenylate cyclase activity, and the beta-arrestin pathway that promotes internalization of the receptor. APLNR/APJ also functions as mechanoreceptor that is activated by pathological stimuli in a G-protein-independent fashion to induce beta-arrestin signaling, hence eliciting cardiac hypertrophy. However, the presence of apelin ligand blunts cardiac hypertrophic induction from APLNR/APJ on response to pathological stimuli. Plays a key role in early development such as gastrulation, blood vessels formation and heart morphogenesis by acting as a APELA receptor. May promote angioblast migration toward the embryonic midline, i.e. the position of the future vessel formation, during vasculogenesis. Promotes sinus venosus (SV)-derived endothelial cells migration into the developing heart to promote coronary blood vessel development. Also plays a role in various processes in adults such as regulation of blood vessel formation, blood pressure, heart contractility and heart failure. The sequence is that of Apelin receptor from Rattus norvegicus (Rat).